We begin with the raw amino-acid sequence, 1180 residues long: MMLLLPFLLGLLGPGSYLFISGDCQEVATVMVKFQVTEEVPSGTVIGKLSQELRVEERRGKAGDAFQILQLPQALPVQMNSEDGLLSTSSRLDREKLCRQEDPCLVSFDVLATGASALIHVEIQVLDINDHQPQFPKDEQELEISESASLHTRIPLDRALDQDTGPNSLYSYSLSPSEHFALDVIVGPDETKHAELVVVKELDRELHSYFDLVLTAYDNGNPPKSGISVVKVNVLDSNDNSPVFAESSLALEIPEDTVPGTLLINLTATDPDQGPNGEVEFFFGKHVSPEVMNTFGIDAKTGQIILRQALDYEKNPAYEVDVQARDLGPNSIPGHCKVLIKVLDVNDNAPSILITWASQTSLVSEDLPRDSFIALVSANDLDSGNNGLVHCWLNQELGHFRLKRTNGNTYMLLTNATLDREQWPIYTLTVFAQDQGPQPLSAEKELQIQVSDVNDNAPVFEKSRYEVSTWENNPPSLHLITLKAHDADLGSNGKVSYRIKDSPVSHLVIIDFETGEVTAQRSLDYEQMAGFEFQVIAEDRGQPQLASSISVWVSLLDANDNAPEVIQPVLSEGKATLSVLVNASTGHLLLPIENPSGMDPAGTGIPPKATHSPWSFLLLTIVARDADSGANGELFYSIQSGNDAHLFFLSPSLGQLFINVTNASSLIGSQWDLGIVVEDQGSPSLQTQVSLKVVFVTSVDHLRDSAHEPGVLSTPALALICLAVLLAIFGLLLALFVSICRTERKDNRAYNCREAESSYRHQPKRPQKHIQKADIHLVPVLRAHENETDEVRPSHKDTSKETLMEAGWDSCLQAPFHLTPTLYRTLRNQGNQGELAESQEVLQDTFNFLFNHPRQRNASRENLNLPESPPAVRQPLLRPLKVPGSPIARATGDQDKEEAPQSPPASSATLRRQRNFNGKVSPRGESGPHQILRSLVRLSVAAFAERNPVEEPAGDSPPVQQISQLLSLLHQGQFQPKPNHRGNKYLAKPGGSSRGTIPDTEGLVGLKPSGQAEPDLEEGPPSPEEDLSVKRLLEEELSSLLDPNTGLALDKLSPPDPAWMARLSLPLTTNYRDNLSSPDATTSEEPRTFQTFGKTVGPGPELSPTGTRLASTFVSEMSSLLEMLLGQHTVPVEAASAALRRLSVCGRTLSLDLATSGASASEAQGRKKAAESRLGCGRNL.

The first 17 residues, 1 to 17 (MMLLLPFLLGLLGPGSY), serve as a signal peptide directing secretion. Residues 18–716 (LFISGDCQEV…HEPGVLSTPA (699 aa)) lie on the Extracellular side of the membrane. 5 Cadherin domains span residues 28–135 (ATVM…QPQF), 136–244 (PKDE…SPVF), 245–352 (AESS…APSI), 355–460 (TWAS…APVF), and 461–565 (EKSR…APEV). 2 N-linked (GlcNAc...) asparagine glycosylation sites follow: asparagine 265 and asparagine 415. Residues asparagine 582, asparagine 659, and asparagine 662 are each glycosylated (N-linked (GlcNAc...) asparagine). Positions 600 to 711 (PAGTGIPPKA…LRDSAHEPGV (112 aa)) constitute a Cadherin 6 domain. Residues 717–737 (LALICLAVLLAIFGLLLALFV) traverse the membrane as a helical segment. The Cytoplasmic segment spans residues 738–1180 (SICRTERKDN…ESRLGCGRNL (443 aa)). Disordered stretches follow at residues 857-930 (NASR…GPHQ) and 973-1026 (QFQP…PEED). A Phosphoserine modification is found at serine 859. The span at 904-918 (PASSATLRRQRNFNG) shows a compositional bias: polar residues. Residues 1014–1026 (PDLEEGPPSPEED) are compositionally biased toward acidic residues. Serine 1064 carries the phosphoserine modification. Residues 1076-1093 (SSPDATTSEEPRTFQTFG) show a composition bias toward polar residues. Disordered regions lie at residues 1076–1104 (SSPD…ELSP) and 1156–1180 (SGAS…GRNL).

N-glycosylated. In terms of processing, cleaved by ADAM10 close to the transmembrane domain to release the Protocadherin-12, secreted form in the serum. Cleavage results in reduced cellular adhesion in a cell migration assay. As to expression, expressed in endothelial cells: localizes in vasculogenic rather than angiogenic endothelium. Strongly expressed in a subset of invasive cells of the placenta, named glycogen-rich trophoblasts cells (at protein level). glycogen-rich trophoblasts cells originate from the from the ectoplacental cone where they rapidly form tight islets (at protein level). In adult mice, present at high level in mesangial cells of kidney glomeruli, while expression was not detected in other types of perivascular cells.

Its subcellular location is the cell membrane. The protein resides in the cell junction. It localises to the secreted. In terms of biological role, cellular adhesion molecule that may play an important role in cell-cell interactions at interendothelial junctions. Acts as a regulator of cell migration, probably via increasing cell-cell adhesion. Promotes homotypic calcium-dependent aggregation and adhesion and clusters at intercellular junctions. Unable to bind to catenins, weakly associates with the cytoskeleton. The polypeptide is Protocadherin-12 (Mus musculus (Mouse)).